We begin with the raw amino-acid sequence, 83 residues long: Protein YciN (83 aa).

This chain is Protein YciN (yciN), found in Escherichia coli O157:H7.